Reading from the N-terminus, the 89-residue chain is Small ribosomal subunit protein bS16 (89 aa).

The protein belongs to the bacterial ribosomal protein bS16 family.

In Gloeobacter violaceus (strain ATCC 29082 / PCC 7421), this protein is Small ribosomal subunit protein bS16.